The sequence spans 323 residues: EKNKIRPRGQRDSSYYWKMEASEVMLSTRIGSGSFGTVYKGKWHGDVAVKILKVVDPTPEQLQAFRNEVAVLRKTRHVNILLFMGYMTKDNLAIVTQWCEGSSLYKHLHVQETKFQMFQLIDIARQTAQGMDYLHAKNIIHRDMKSNNIFLHEGLTVKIGDFGLATVKSRWSGSQQVEQPTGSVLWMAPEVIRMQDDNPFSFQSDVYSYGIVLYELMAGELPYAHINNRDQIIFMVGRGYASPDLSRLYKNCPKAIKRLVADCVKKVKEERPLFPQILSSIELLQHSLPKINRSAPEPSLHRAAHTEDINACTLTTSPRLPVF.

The region spanning 24–284 (VMLSTRIGSG…PQILSSIELL (261 aa)) is the Protein kinase domain. ATP is bound by residues 30 to 38 (IGSGSFGTV) and Lys50. Asp143 functions as the Proton acceptor in the catalytic mechanism.

It belongs to the protein kinase superfamily. TKL Ser/Thr protein kinase family. RAF subfamily.

It catalyses the reaction L-seryl-[protein] + ATP = O-phospho-L-seryl-[protein] + ADP + H(+). The enzyme catalyses L-threonyl-[protein] + ATP = O-phospho-L-threonyl-[protein] + ADP + H(+). This Murine sarcoma virus 3611 protein is Serine/threonine-protein kinase-transforming protein raf (V-RAF).